Consider the following 338-residue polypeptide: Lipoate-protein ligase A (338 aa).

Positions 29–216 (PATQRVLFLW…AFFAHYGERV (188 aa)) constitute a BPL/LPL catalytic domain. ATP contacts are provided by residues R71, 76 to 79 (GAVF), and K134. K134 lines the (R)-lipoate pocket.

The protein belongs to the LplA family. Monomer.

It is found in the cytoplasm. It carries out the reaction L-lysyl-[lipoyl-carrier protein] + (R)-lipoate + ATP = N(6)-[(R)-lipoyl]-L-lysyl-[lipoyl-carrier protein] + AMP + diphosphate + H(+). It participates in protein modification; protein lipoylation via exogenous pathway; protein N(6)-(lipoyl)lysine from lipoate: step 1/2. Its pathway is protein modification; protein lipoylation via exogenous pathway; protein N(6)-(lipoyl)lysine from lipoate: step 2/2. Functionally, catalyzes both the ATP-dependent activation of exogenously supplied lipoate to lipoyl-AMP and the transfer of the activated lipoyl onto the lipoyl domains of lipoate-dependent enzymes. The polypeptide is Lipoate-protein ligase A (Escherichia coli O6:K15:H31 (strain 536 / UPEC)).